Here is a 575-residue protein sequence, read N- to C-terminus: G2/mitotic-specific cyclin-B3 (575 aa).

A D-box motif is present at residues 75-83 (RSALGNLTN). Ser215 is subject to Phosphoserine.

Belongs to the cyclin family. Cyclin AB subfamily. As to quaternary structure, interacts with Cdk1 kinase. Ubiquitinated. Ubiquitination leads to its degradation in early anaphase. In terms of tissue distribution, in embryo, it is expressed in all mitotically proliferating cells, with a high level in neuroblasts. Not expressed in old embryos and thereafter. Not expressed in endoreplicating tissues.

The protein localises to the nucleus. Its function is as follows. Cyclins are positive regulatory subunits of the cyclin-dependent kinases (CDKs), and thereby play an essential role in the control of the cell cycle, notably via their destruction during cell division. Probably functions redundantly with other cyclins in regulation of cell cycle. Its presence may be required to delay a deadline for completing cytokinesis that is ordinary imposed by nuclear envelope reformation. Degradation of CycB and CycB3 promote cytokinesis furrow initiation and ingression. Required with CycB for female fertility. The protein is G2/mitotic-specific cyclin-B3 (CycB3) of Drosophila melanogaster (Fruit fly).